We begin with the raw amino-acid sequence, 264 residues long: Proteasome assembly chaperone 2 (264 aa).

Position 137 is a phosphothreonine (threonine 137).

Belongs to the PSMG2 family. In terms of assembly, forms a heterodimer with PSMG1. The PSMG1-PSMG2 heterodimer interacts directly with the PSMA5 and PSMA7 proteasome alpha subunits. Degraded by the proteasome upon completion of 20S proteasome maturation.

It localises to the nucleus. In terms of biological role, chaperone protein which promotes assembly of the 20S proteasome as part of a heterodimer with PSMG1. The PSMG1-PSMG2 heterodimer binds to the PSMA5 and PSMA7 proteasome subunits, promotes assembly of the proteasome alpha subunits into the heteroheptameric alpha ring and prevents alpha ring dimerization. The protein is Proteasome assembly chaperone 2 of Mus musculus (Mouse).